The chain runs to 266 residues: 4-hydroxy-tetrahydrodipicolinate reductase (266 aa).

NAD(+)-binding positions include 8–13 and Glu-33; that span reads GAAGRM. NADP(+) is bound at residue Arg-34. Residues 97–99 and 121–124 each bind NAD(+); these read GST and APNM. The Proton donor/acceptor role is filled by His-154. A (S)-2,3,4,5-tetrahydrodipicolinate-binding site is contributed by His-155. The Proton donor role is filled by Lys-158. Residue 164-165 coordinates (S)-2,3,4,5-tetrahydrodipicolinate; sequence GT.

Belongs to the DapB family.

The protein localises to the cytoplasm. It catalyses the reaction (S)-2,3,4,5-tetrahydrodipicolinate + NAD(+) + H2O = (2S,4S)-4-hydroxy-2,3,4,5-tetrahydrodipicolinate + NADH + H(+). The enzyme catalyses (S)-2,3,4,5-tetrahydrodipicolinate + NADP(+) + H2O = (2S,4S)-4-hydroxy-2,3,4,5-tetrahydrodipicolinate + NADPH + H(+). It participates in amino-acid biosynthesis; L-lysine biosynthesis via DAP pathway; (S)-tetrahydrodipicolinate from L-aspartate: step 4/4. Catalyzes the conversion of 4-hydroxy-tetrahydrodipicolinate (HTPA) to tetrahydrodipicolinate. The polypeptide is 4-hydroxy-tetrahydrodipicolinate reductase (Geobacter metallireducens (strain ATCC 53774 / DSM 7210 / GS-15)).